The chain runs to 371 residues: MSNASKKVIVGMSGGVDSSVSAYLLMQQGYQVEGLFMKNWEEDDTDEYCAASDDLADAEKVCETLGIELHTINFAAEYWDNVFEYFLEEYKAGRTPNPDIMCNKEIKFKAFLEFAAEALDADYIATGHYVRRQQRDGKWEMLRGLDSNKDQSYFLYTLSHEHIAQTLFPVGELEKPEVRRIAEEQGLVTADKKDSTGICFIGERKFKDFLQQYLPAKPGPIESVEGEALGEHEGLMYHTLGQRKGLHIGGMADNSGEPWYVVDKDVERNVLIVAQGKKHPRLYSQGLIAGQLHWVSRNAPPEAFDCTVKTRYRQQDIPCRVTPLSNGDFQVQFKEPVAAVTPGQSAVFYSDDVCLGGGIIEQRITDFEVKL.

ATP is bound by residues Gly-11–Ser-18 and Met-37. The tract at residues Asn-97–Asp-99 is interaction with target base in tRNA. Catalysis depends on Cys-102, which acts as the Nucleophile. Cys-102 and Cys-199 are joined by a disulfide. Gly-127 lines the ATP pocket. The interval Lys-149–Gln-151 is interaction with tRNA. Catalysis depends on Cys-199, which acts as the Cysteine persulfide intermediate. The segment at Arg-311–Tyr-312 is interaction with tRNA.

Belongs to the MnmA/TRMU family.

The protein resides in the cytoplasm. The catalysed reaction is S-sulfanyl-L-cysteinyl-[protein] + uridine(34) in tRNA + AH2 + ATP = 2-thiouridine(34) in tRNA + L-cysteinyl-[protein] + A + AMP + diphosphate + H(+). In terms of biological role, catalyzes the 2-thiolation of uridine at the wobble position (U34) of tRNA, leading to the formation of s(2)U34. The polypeptide is tRNA-specific 2-thiouridylase MnmA (Idiomarina loihiensis (strain ATCC BAA-735 / DSM 15497 / L2-TR)).